Reading from the N-terminus, the 490-residue chain is Cytochrome P450 71D11 (490 aa).

Residue cysteine 427 participates in heme binding.

The protein belongs to the cytochrome P450 family. The cofactor is heme.

The sequence is that of Cytochrome P450 71D11 (CYP71D11) from Lotus japonicus (Lotus corniculatus var. japonicus).